The primary structure comprises 615 residues: MTYRSCIPQNDLECYYNPNKTKYKSTNILSSIQHKIDKELTAYITDKTIDDTFGNRMIVFRDSFYDKPKNSKIFRQIIHMIETSNCWYSVKFLMDNGISSLFSLGITPHHTYPKKYYPMIISPILSLESKNDYQDYLALVRLKNFIGYSYDYITKYWNYKLSNKQNFINDVMEMESQLSLVTLTIEQQNNPFVIYNSLKWREFLEKYDVDNFWSSILGSYLKKEDYVIFDNIQYLSYLREYLKNTSKNSIKNYLVYSLVKKFGLYTDLLEFYNDIVIESINHDQIFLNMFSQYFGIYLETVFETRYHDKDKKEYITKMFYDMKLYLRNYFIECKFTDKTKREISLKIDNLHMVIGRQNYQYDLENFPLMGNDFYENVLNLERYYFHESIKLIGSTINKEWFSINGGMYSFEVNAYYDPICNVLYIPTSIINDMTISLERDDVYNYGSIGTILAHEIMHSLDNFGLQVNCDLSIGNKWDISDYKFYLSDLRKIIQHRIKLSNYDIASSIDALSEDISDTLGLKLSFKTYLSKFNKKIEPDNLSTNDKIHLQKFFYSWTETFKNINNNNQDDHSPSYIRINAPLAHLDEFYYLYGVESQHLNYLDPQLRSRILDKIN.

The Peptidase M13 domain occupies 1–611 (MTYRSCIPQN…LDPQLRSRIL (611 aa)). H454 contributes to the Zn(2+) binding site. The active site involves E455. Residues H458 and E513 each contribute to the Zn(2+) site. The Proton donor role is filled by D517.

It belongs to the peptidase M13 family. It depends on Zn(2+) as a cofactor.

Zinc metalloprotease. The chain is Zinc metalloproteinase R519 from Acanthamoeba polyphaga (Amoeba).